Here is a 439-residue protein sequence, read N- to C-terminus: uncharacterized protein (439 aa).

Disordered regions lie at residues 1 to 36, 126 to 157, and 411 to 439; these read MRPG…SKQA, SRTG…GVPI, and FRSD…AVPR.

This is an uncharacterized protein from Streptomyces fradiae (Streptomyces roseoflavus).